Here is a 318-residue protein sequence, read N- to C-terminus: Very-long-chain 3-oxoacyl-CoA reductase-A (318 aa).

A helical transmembrane segment spans residues 15 to 35; that stretch reads FWYLGVLAAAWWGLRAACCLL. Residue 54 to 83 participates in NADP(+) binding; the sequence is GKWAVVTGATDGIGKAYAEELARRGMSIVL. The next 2 helical transmembrane spans lie at 187–207 and 281–301; these read GVIL…LTVY and AIMG…SMGM. S194 contacts substrate. Y207 functions as the Proton acceptor in the catalytic mechanism.

The protein belongs to the short-chain dehydrogenases/reductases (SDR) family. 17-beta-HSD 3 subfamily.

The protein resides in the endoplasmic reticulum membrane. The catalysed reaction is a very-long-chain (3R)-3-hydroxyacyl-CoA + NADP(+) = a very-long-chain 3-oxoacyl-CoA + NADPH + H(+). The enzyme catalyses 17beta-estradiol + NAD(+) = estrone + NADH + H(+). It catalyses the reaction 17beta-estradiol + NADP(+) = estrone + NADPH + H(+). The protein operates within lipid metabolism; fatty acid biosynthesis. It participates in steroid biosynthesis; estrogen biosynthesis. Catalyzes the second of the four reactions of the long-chain fatty acids elongation cycle. This endoplasmic reticulum-bound enzymatic process, allows the addition of two carbons to the chain of long- and very long-chain fatty acids/VLCFAs per cycle. This enzyme has a 3-ketoacyl-CoA reductase activity, reducing 3-ketoacyl-CoA to 3-hydroxyacyl-CoA, within each cycle of fatty acid elongation. Thereby, it may participate in the production of VLCFAs of different chain lengths that are involved in multiple biological processes as precursors of membrane lipids and lipid mediators. May also catalyze the transformation of estrone (E1) into estradiol (E2) and play a role in estrogen formation. This is Very-long-chain 3-oxoacyl-CoA reductase-A (hsd17b12-a) from Xenopus laevis (African clawed frog).